The following is a 311-amino-acid chain: Sulfate adenylyltransferase subunit 2 (311 aa).

Belongs to the PAPS reductase family. CysD subfamily. As to quaternary structure, heterodimer composed of CysD, the smaller subunit, and CysN.

It carries out the reaction sulfate + ATP + H(+) = adenosine 5'-phosphosulfate + diphosphate. The protein operates within sulfur metabolism; hydrogen sulfide biosynthesis; sulfite from sulfate: step 1/3. Functionally, with CysN forms the ATP sulfurylase (ATPS) that catalyzes the adenylation of sulfate producing adenosine 5'-phosphosulfate (APS) and diphosphate, the first enzymatic step in sulfur assimilation pathway. APS synthesis involves the formation of a high-energy phosphoric-sulfuric acid anhydride bond driven by GTP hydrolysis by CysN coupled to ATP hydrolysis by CysD. The chain is Sulfate adenylyltransferase subunit 2 from Caulobacter vibrioides (strain ATCC 19089 / CIP 103742 / CB 15) (Caulobacter crescentus).